The primary structure comprises 239 residues: 1-(5-phosphoribosyl)-5-[(5-phosphoribosylamino)methylideneamino] imidazole-4-carboxamide isomerase (239 aa).

Asp-9 acts as the Proton acceptor in catalysis. The Proton donor role is filled by Asp-131.

This sequence belongs to the HisA/HisF family.

It is found in the cytoplasm. The catalysed reaction is 1-(5-phospho-beta-D-ribosyl)-5-[(5-phospho-beta-D-ribosylamino)methylideneamino]imidazole-4-carboxamide = 5-[(5-phospho-1-deoxy-D-ribulos-1-ylimino)methylamino]-1-(5-phospho-beta-D-ribosyl)imidazole-4-carboxamide. The protein operates within amino-acid biosynthesis; L-histidine biosynthesis; L-histidine from 5-phospho-alpha-D-ribose 1-diphosphate: step 4/9. The sequence is that of 1-(5-phosphoribosyl)-5-[(5-phosphoribosylamino)methylideneamino] imidazole-4-carboxamide isomerase from Parabacteroides distasonis (strain ATCC 8503 / DSM 20701 / CIP 104284 / JCM 5825 / NCTC 11152).